Here is a 72-residue protein sequence, read N- to C-terminus: Translation initiation factor IF-1 (72 aa).

Residues M1–K72 enclose the S1-like domain.

Belongs to the IF-1 family. As to quaternary structure, component of the 30S ribosomal translation pre-initiation complex which assembles on the 30S ribosome in the order IF-2 and IF-3, IF-1 and N-formylmethionyl-tRNA(fMet); mRNA recruitment can occur at any time during PIC assembly.

It localises to the cytoplasm. In terms of biological role, one of the essential components for the initiation of protein synthesis. Stabilizes the binding of IF-2 and IF-3 on the 30S subunit to which N-formylmethionyl-tRNA(fMet) subsequently binds. Helps modulate mRNA selection, yielding the 30S pre-initiation complex (PIC). Upon addition of the 50S ribosomal subunit IF-1, IF-2 and IF-3 are released leaving the mature 70S translation initiation complex. The polypeptide is Translation initiation factor IF-1 (Xanthomonas campestris pv. campestris (strain 8004)).